We begin with the raw amino-acid sequence, 399 residues long: Imidazolonepropionase (399 aa).

2 residues coordinate Fe(3+): His-68 and His-70. Residues His-68 and His-70 each coordinate Zn(2+). 4-imidazolone-5-propanoate-binding residues include Arg-77, Tyr-140, and His-173. Residue Tyr-140 participates in N-formimidoyl-L-glutamate binding. A Fe(3+)-binding site is contributed by His-238. His-238 is a binding site for Zn(2+). Gln-241 contributes to the 4-imidazolone-5-propanoate binding site. A Fe(3+)-binding site is contributed by Asp-313. Asp-313 provides a ligand contact to Zn(2+). 2 residues coordinate N-formimidoyl-L-glutamate: Asn-315 and Gly-317. 4-imidazolone-5-propanoate is bound at residue Thr-318.

The protein belongs to the metallo-dependent hydrolases superfamily. HutI family. It depends on Zn(2+) as a cofactor. The cofactor is Fe(3+).

It is found in the cytoplasm. It catalyses the reaction 4-imidazolone-5-propanoate + H2O = N-formimidoyl-L-glutamate. Its pathway is amino-acid degradation; L-histidine degradation into L-glutamate; N-formimidoyl-L-glutamate from L-histidine: step 3/3. Functionally, catalyzes the hydrolytic cleavage of the carbon-nitrogen bond in imidazolone-5-propanoate to yield N-formimidoyl-L-glutamate. It is the third step in the universal histidine degradation pathway. This is Imidazolonepropionase from Rhizorhabdus wittichii (strain DSM 6014 / CCUG 31198 / JCM 15750 / NBRC 105917 / EY 4224 / RW1) (Sphingomonas wittichii).